The chain runs to 365 residues: 3-dehydroquinate synthase (365 aa).

NAD(+) contacts are provided by residues 107–111, 131–132, lysine 144, and lysine 153; these read GVIGD and TT. Glutamate 186, histidine 251, and histidine 268 together coordinate Zn(2+).

The protein belongs to the sugar phosphate cyclases superfamily. Dehydroquinate synthase family. The cofactor is Co(2+). Zn(2+) is required as a cofactor. It depends on NAD(+) as a cofactor.

The protein localises to the cytoplasm. It catalyses the reaction 7-phospho-2-dehydro-3-deoxy-D-arabino-heptonate = 3-dehydroquinate + phosphate. The protein operates within metabolic intermediate biosynthesis; chorismate biosynthesis; chorismate from D-erythrose 4-phosphate and phosphoenolpyruvate: step 2/7. Catalyzes the conversion of 3-deoxy-D-arabino-heptulosonate 7-phosphate (DAHP) to dehydroquinate (DHQ). This Picosynechococcus sp. (strain ATCC 27264 / PCC 7002 / PR-6) (Agmenellum quadruplicatum) protein is 3-dehydroquinate synthase.